The following is a 193-amino-acid chain: MNFLAHLHLAHLAESSLSGNLLADFVRGNPEESFPPDVVAGIHMHRRIDVLTDNLPEVREAREWFRRETRRVAPITLDVMWDHFLSRHWSQLSPDFPLQEFICYARKQVMTILPDSPPRFINLNNYLWSEQWLVRYRDMDFIQNVLNGMASRRPRLDALRDSWYDLNAHYTALETRFWQFYPRMMAQASHKAL.

The protein belongs to the AcpH family.

The catalysed reaction is holo-[ACP] + H2O = apo-[ACP] + (R)-4'-phosphopantetheine + H(+). Functionally, converts holo-ACP to apo-ACP by hydrolytic cleavage of the phosphopantetheine prosthetic group from ACP. In Shigella boydii serotype 18 (strain CDC 3083-94 / BS512), this protein is Acyl carrier protein phosphodiesterase.